The following is a 130-amino-acid chain: Small ribosomal subunit protein uS9 (130 aa).

Residues 108-130 (SREKERKKYGQRGARARFQYSKR) form a disordered region.

This sequence belongs to the universal ribosomal protein uS9 family.

The protein is Small ribosomal subunit protein uS9 of Solidesulfovibrio magneticus (strain ATCC 700980 / DSM 13731 / RS-1) (Desulfovibrio magneticus).